The chain runs to 555 residues: Glutamate--tRNA ligase (555 aa).

Positions 100–110 (PNPSGPLHIGH) match the 'HIGH' region motif.

Belongs to the class-I aminoacyl-tRNA synthetase family. Glutamate--tRNA ligase type 2 subfamily.

It localises to the cytoplasm. The catalysed reaction is tRNA(Glu) + L-glutamate + ATP = L-glutamyl-tRNA(Glu) + AMP + diphosphate. Its function is as follows. Catalyzes the attachment of glutamate to tRNA(Glu) in a two-step reaction: glutamate is first activated by ATP to form Glu-AMP and then transferred to the acceptor end of tRNA(Glu). In Methanococcus maripaludis (strain C5 / ATCC BAA-1333), this protein is Glutamate--tRNA ligase.